A 708-amino-acid chain; its full sequence is Leukotoxin translocation ATP-binding protein LktB (708 aa).

The 126-residue stretch at 1 to 126 (MEANHQRNDL…ACYQGQLILV (126 aa)) folds into the Peptidase C39 domain. Positions 155-437 (FLETLIVSIF…LAQLWQDFQQ (283 aa)) constitute an ABC transmembrane type-1 domain. 5 helical membrane passes run 159–179 (LIVS…FQVV), 192–212 (LNII…LSGL), 270–290 (ALTS…MWYY), 296–316 (LVIL…SPIL), and 389–409 (VMVI…LSIG). The 236-residue stretch at 469–704 (ISFKNIRFRY…SNGLYSYLHQ (236 aa)) folds into the ABC transporter domain. 503 to 510 (GRSGSGKS) is a binding site for ATP.

The protein belongs to the ABC transporter superfamily. Protein-1 exporter (TC 3.A.1.109) family. Homodimer.

It is found in the cell inner membrane. It carries out the reaction ATP + H2O + proteinSide 1 = ADP + phosphate + proteinSide 2.. In terms of biological role, part of the ABC transporter complex LktBD involved in leukotoxin export. Transmembrane domains (TMD) form a pore in the inner membrane and the ATP-binding domain (NBD) is responsible for energy generation. This is Leukotoxin translocation ATP-binding protein LktB (lktB) from Mannheimia haemolytica (Pasteurella haemolytica).